A 368-amino-acid polypeptide reads, in one-letter code: GLABROUS1 enhancer-binding protein-like (368 aa).

The disordered stretch occupies residues 1–123; sequence MAPKKAEEVV…TSDTEHVKKP (123 aa). The segment covering 17–31 has biased composition (acidic residues); the sequence is SEEEESGSSGEESES. Residues 35 to 47 show a composition bias toward basic and acidic residues; the sequence is VPKKVESSQKPES. A compositionally biased stretch (polar residues) spans 84–97; that stretch reads TSGSAATVPESSTA. The span at 100–123 shows a compositional bias: basic and acidic residues; it reads PLKEAAPEAIKKQKTSDTEHVKKP.

Belongs to the GeBP family. In terms of assembly, mono-, di- and oligomers. Associated with the Mediator complex. Interacts with MED6. Interacts with MED10A, MED28 and MED32. Interacts with DEK3.

The protein localises to the nucleus. Its function is as follows. Transcription factor that binds promoters containing the CryR2 element, 5'-ACATAWCT-3'. The DNA-binding activity is decreased upon direct physical interaction with the mediator subunits and is modulated by redox conditions. The oxidized protein is the preferential binding form. This chain is GLABROUS1 enhancer-binding protein-like, found in Arabidopsis thaliana (Mouse-ear cress).